Consider the following 268-residue polypeptide: Undecaprenyl-diphosphatase (268 aa).

The next 7 helical transmembrane spans lie at 47-67 (FAILIQLGAILAIVALYFFKL), 83-103 (FIIGVLIAFLPAVIIGLIAGK), 109-129 (LFDPWVVCFSLIVGGAILLWV), 144-164 (YPLMMYLWIGVAQCLAMIPGV), 184-204 (AAEFSFFLAIPTMVGAFVYDF), 218-238 (LIAIGFVVSFITAMIVVKAFL), and 246-266 (FVLFAWWRVIVGTLGLIALAL).

It belongs to the UppP family.

The protein localises to the cell inner membrane. The enzyme catalyses di-trans,octa-cis-undecaprenyl diphosphate + H2O = di-trans,octa-cis-undecaprenyl phosphate + phosphate + H(+). Catalyzes the dephosphorylation of undecaprenyl diphosphate (UPP). Confers resistance to bacitracin. In Bradyrhizobium sp. (strain ORS 278), this protein is Undecaprenyl-diphosphatase.